We begin with the raw amino-acid sequence, 96 residues long: Small ribosomal subunit protein bS6 (96 aa).

This sequence belongs to the bacterial ribosomal protein bS6 family.

In terms of biological role, binds together with bS18 to 16S ribosomal RNA. The chain is Small ribosomal subunit protein bS6 from Streptococcus gordonii (strain Challis / ATCC 35105 / BCRC 15272 / CH1 / DL1 / V288).